We begin with the raw amino-acid sequence, 287 residues long: MAIKFENVSYVYSPGSPLEAIGLDQLNFSLEEGKFIALVGHTGSGKSTLMQHFNALLKPTSGKIEIAGYTITPETGNKGLKDLRRKVSLAFQFSEAQLFENTVLKDVEYGPRNFGFSEDEAREAALKWLKKVGLKDDLIEHSPFDLSGGQMRRVALAGVLAYEPEIICLDEPAAGLDPMGRLEMMQLFKDYQAAGHTVILVTHNMDDVADYADDVLALEHGRLIKHASPKEVFKDSEWLQKHHLAEPRSARFAAKLEAAGLKLPGQPLTMPELADAIKQSLKGGEHE.

The 243-residue stretch at Ile3–Ala245 folds into the ABC transporter domain. Gly40–Ser47 is a binding site for ATP.

Belongs to the ABC transporter superfamily. Energy-coupling factor EcfA family. Forms a stable energy-coupling factor (ECF) transporter complex composed of 2 membrane-embedded substrate-binding proteins (S component), 2 ATP-binding proteins (A component) and 2 transmembrane proteins (T component).

It localises to the cell membrane. In terms of biological role, ATP-binding (A) component of a common energy-coupling factor (ECF) ABC-transporter complex. Unlike classic ABC transporters this ECF transporter provides the energy necessary to transport a number of different substrates. The chain is Energy-coupling factor transporter ATP-binding protein EcfA2 from Lactobacillus delbrueckii subsp. bulgaricus (strain ATCC 11842 / DSM 20081 / BCRC 10696 / JCM 1002 / NBRC 13953 / NCIMB 11778 / NCTC 12712 / WDCM 00102 / Lb 14).